Here is a 186-residue protein sequence, read N- to C-terminus: Transposon Tn501 resolvase (186 aa).

The region spanning 4–137 is the Resolvase/invertase-type recombinase catalytic domain; the sequence is HRIGYVRVSS…EGITLAKQRG (134 aa). The active-site O-(5'-phospho-DNA)-serine intermediate is the S12. The interval 17–38 is disordered; the sequence is NPERQLEQTQVSKVFTDKASGK. Residues 164 to 183 constitute a DNA-binding region (H-T-H motif); that stretch reads KAQLAREFNISRETLYQYLR.

Belongs to the site-specific recombinase resolvase family.

Its function is as follows. Resolvase catalyzes the resolution (a site-specific recombination) of the cointegrated replicon to yield the final transposition products. This Pseudomonas aeruginosa protein is Transposon Tn501 resolvase (tnpR).